We begin with the raw amino-acid sequence, 218 residues long: Carnitine transport permease protein OpuCB (218 aa).

Residues 19–198 (TWQHLFISLS…ILALVVEFAL (180 aa)) form the ABC transmembrane type-1 domain. The next 5 helical transmembrane spans lie at 23–43 (LFIS…TGIL), 48–68 (PKVA…PSLA), 79–101 (VGTL…RNTF), 149–169 (VIAW…DFIF), and 179–199 (LILG…FALG).

The protein belongs to the binding-protein-dependent transport system permease family. In terms of assembly, the complex is composed of two ATP-binding proteins (OpuCA), two transmembrane proteins (OpuCB and OpuCD) and a solute-binding protein (OpuCC).

The protein localises to the cell membrane. Functionally, part of the ABC transporter complex OpuCABCD involved in carnitine uptake. Probably responsible for the translocation of the substrate across the membrane. Involved, with BetL and GbuABC, in osmoprotection and cryoprotection of Listeria. This is Carnitine transport permease protein OpuCB (opuCB) from Listeria monocytogenes.